Reading from the N-terminus, the 518-residue chain is Nicotine N-demethylase CYP82E3 (518 aa).

The chain crosses the membrane as a helical span at residues valine 2–tryptophan 22. Lysine 254 is covalently cross-linked (Glycyl lysine isopeptide (Lys-Gly) (interchain with G-Cter in ubiquitin)). Residue cysteine 458 coordinates heme.

This sequence belongs to the cytochrome P450 family. CYP82E2 subfamily. Requires heme as cofactor. In terms of tissue distribution, expressed in leaves.

The protein resides in the membrane. The enzyme catalyses (S)-nicotine + reduced [NADPH--hemoprotein reductase] + O2 = (S)-nornicotine + formaldehyde + oxidized [NADPH--hemoprotein reductase] + H2O + H(+). The protein operates within alkaloid biosynthesis; nicotine biosynthesis. Functionally, involved in the biosynthesis of pyridine alkaloid natural products, leading mainly to the production of anabasine, anatabine, nicotine and nornicotine, effective deterrents against herbivores with antiparasitic and pesticide properties (neurotoxins); nornicotine serves as the precursor in the synthesis of the carcinogen compound N'-nitrosonornicotine (NNN). Catalyzes the demethylation of nicotine to form nornicotine. This chain is Nicotine N-demethylase CYP82E3, found in Nicotiana tomentosiformis (Tobacco).